The following is a 348-amino-acid chain: S-adenosylmethionine:tRNA ribosyltransferase-isomerase (348 aa).

This sequence belongs to the QueA family. As to quaternary structure, monomer.

The protein localises to the cytoplasm. It carries out the reaction 7-aminomethyl-7-carbaguanosine(34) in tRNA + S-adenosyl-L-methionine = epoxyqueuosine(34) in tRNA + adenine + L-methionine + 2 H(+). It participates in tRNA modification; tRNA-queuosine biosynthesis. In terms of biological role, transfers and isomerizes the ribose moiety from AdoMet to the 7-aminomethyl group of 7-deazaguanine (preQ1-tRNA) to give epoxyqueuosine (oQ-tRNA). The protein is S-adenosylmethionine:tRNA ribosyltransferase-isomerase of Alteromonas mediterranea (strain DSM 17117 / CIP 110805 / LMG 28347 / Deep ecotype).